The following is a 644-amino-acid chain: Threonine--tRNA ligase (644 aa).

Positions 1–61 (MVAITLPDGS…VADAKVEIVT (61 aa)) constitute a TGS domain. Residues 242–533 (DHRKIGKALN…LIENYAGWMP (292 aa)) form a catalytic region. Zn(2+)-binding residues include C333, H384, and H510.

It belongs to the class-II aminoacyl-tRNA synthetase family. As to quaternary structure, homodimer. Zn(2+) serves as cofactor.

It localises to the cytoplasm. It carries out the reaction tRNA(Thr) + L-threonine + ATP = L-threonyl-tRNA(Thr) + AMP + diphosphate + H(+). Catalyzes the attachment of threonine to tRNA(Thr) in a two-step reaction: L-threonine is first activated by ATP to form Thr-AMP and then transferred to the acceptor end of tRNA(Thr). Also edits incorrectly charged L-seryl-tRNA(Thr). In Psychrobacter arcticus (strain DSM 17307 / VKM B-2377 / 273-4), this protein is Threonine--tRNA ligase.